Consider the following 708-residue polypeptide: Leukotoxin translocation ATP-binding protein LktB (708 aa).

The Peptidase C39 domain maps to 1–126; sequence MEANHQRNDL…ACYQGQLILV (126 aa). Residues 155–437 enclose the ABC transmembrane type-1 domain; the sequence is FLETLIVSIF…LAQLWQDFQQ (283 aa). 5 helical membrane passes run 159–179, 192–212, 270–290, 296–316, and 389–409; these read LIVSIFLQIFALITPLFFQVV, LNIITVALAIVIIFEIVLSGL, ALTSVLDLLFSFIFFAVMWYY, LVILGSLPCYILWSIFISPIL, and VMVINLWLGAHLVISGDLSIG. The ABC transporter domain maps to 469–704; sequence ISFKNIRFRY…SNGLYSYLHQ (236 aa). ATP is bound at residue 503 to 510; the sequence is GRSGSGKS.

Belongs to the ABC transporter superfamily. Protein-1 exporter (TC 3.A.1.109) family. Homodimer.

Its subcellular location is the cell inner membrane. The catalysed reaction is ATP + H2O + proteinSide 1 = ADP + phosphate + proteinSide 2.. In terms of biological role, part of the ABC transporter complex LktBD involved in leukotoxin export. Transmembrane domains (TMD) form a pore in the inner membrane and the ATP-binding domain (NBD) is responsible for energy generation. In Mannheimia haemolytica (Pasteurella haemolytica), this protein is Leukotoxin translocation ATP-binding protein LktB (lktB).